Reading from the N-terminus, the 410-residue chain is D-3-phosphoglycerate dehydrogenase (410 aa).

Residues 162–163 (HI), Asp-182, 239–241 (AAR), and Asp-265 contribute to the NAD(+) site. Arg-241 is an active-site residue. Residue Glu-270 is part of the active site. Catalysis depends on His-293, which acts as the Proton donor. 293-296 (HIGG) serves as a coordination point for NAD(+). Residues 341-410 (RLLHIHENRP…DGTIRARVLY (70 aa)) enclose the ACT domain.

It belongs to the D-isomer specific 2-hydroxyacid dehydrogenase family.

The catalysed reaction is (2R)-3-phosphoglycerate + NAD(+) = 3-phosphooxypyruvate + NADH + H(+). It carries out the reaction (R)-2-hydroxyglutarate + NAD(+) = 2-oxoglutarate + NADH + H(+). Its pathway is amino-acid biosynthesis; L-serine biosynthesis; L-serine from 3-phospho-D-glycerate: step 1/3. With respect to regulation, in bacteria displays feedback inhibition by L-serine. Functionally, catalyzes the reversible oxidation of 3-phospho-D-glycerate to 3-phosphonooxypyruvate, the first step of the phosphorylated L-serine biosynthesis pathway. Also catalyzes the reversible oxidation of 2-hydroxyglutarate to 2-oxoglutarate. The protein is D-3-phosphoglycerate dehydrogenase (serA) of Haemophilus influenzae (strain ATCC 51907 / DSM 11121 / KW20 / Rd).